We begin with the raw amino-acid sequence, 202 residues long: IMP cyclohydrolase (202 aa).

This sequence belongs to the archaeal IMP cyclohydrolase family.

It catalyses the reaction IMP + H2O = 5-formamido-1-(5-phospho-D-ribosyl)imidazole-4-carboxamide. Its pathway is purine metabolism; IMP biosynthesis via de novo pathway; IMP from 5-formamido-1-(5-phospho-D-ribosyl)imidazole-4-carboxamide: step 1/1. Its function is as follows. Catalyzes the cyclization of 5-formylamidoimidazole-4-carboxamide ribonucleotide to IMP. The polypeptide is IMP cyclohydrolase (Methanosphaera stadtmanae (strain ATCC 43021 / DSM 3091 / JCM 11832 / MCB-3)).